The primary structure comprises 710 residues: Ribonuclease R (710 aa).

An RNB domain is found at 246–573; that stretch reads RKDLRDKVIV…VHRLLKLYLE (328 aa). The 81-residue stretch at 625-705 folds into the S1 motif domain; it reads GEVFNVVVTN…IRGEIDFVLV (81 aa).

This sequence belongs to the RNR ribonuclease family. RNase R subfamily.

The protein localises to the cytoplasm. It catalyses the reaction Exonucleolytic cleavage in the 3'- to 5'-direction to yield nucleoside 5'-phosphates.. 3'-5' exoribonuclease that releases 5'-nucleoside monophosphates and is involved in maturation of structured RNAs. The chain is Ribonuclease R from Thermotoga maritima (strain ATCC 43589 / DSM 3109 / JCM 10099 / NBRC 100826 / MSB8).